The following is a 396-amino-acid chain: Phosphoglycerate kinase (396 aa).

Residues 23–25, Arg38, 61–64, Arg122, and Arg155 contribute to the substrate site; these read DFN and HMGK. ATP-binding positions include Lys206, Gly296, Glu327, and 353-356; that span reads GGDS.

Belongs to the phosphoglycerate kinase family. In terms of assembly, monomer.

Its subcellular location is the cytoplasm. The enzyme catalyses (2R)-3-phosphoglycerate + ATP = (2R)-3-phospho-glyceroyl phosphate + ADP. It functions in the pathway carbohydrate degradation; glycolysis; pyruvate from D-glyceraldehyde 3-phosphate: step 2/5. This is Phosphoglycerate kinase from Clostridium botulinum (strain Eklund 17B / Type B).